A 443-amino-acid polypeptide reads, in one-letter code: Clustered-asparagine-rich protein (443 aa).

The 91-residue stretch at threonine 16–proline 106 folds into the RRM 1 domain. Positions asparagine 253–methionine 279 are disordered. Positions asparagine 256–asparagine 277 are enriched in low complexity. The RRM 2 domain occupies serine 342–glycine 435.

In Plasmodium falciparum, this protein is Clustered-asparagine-rich protein.